The chain runs to 910 residues: Disease resistance protein RPH8A (910 aa).

The stretch at aspartate 15–arginine 57 forms a coiled coil. One can recognise an NB-ARC domain in the interval arginine 146–isoleucine 459. Glycine 192–threonine 199 provides a ligand contact to ATP.

The protein belongs to the disease resistance NB-LRR family. RPP8/HRT subfamily.

Its function is as follows. Disease resistance protein. Resistance proteins guard the plant against pathogens that contain an appropriate avirulence protein via an indirect interaction with this avirulence protein. That triggers a defense system including the hypersensitive response, which restricts the pathogen growth. In contrast to RPP8, it does not specifically recognize the Emco5 avirulence protein from Hyaloperonospora parasitica. The protein is Disease resistance protein RPH8A (RPH8A) of Arabidopsis thaliana (Mouse-ear cress).